We begin with the raw amino-acid sequence, 192 residues long: Interferon (192 aa).

Residues M1–A30 form the signal peptide. Intrachain disulfides connect C31–C128, C60–C154, and C67–C167. N-linked (GlcNAc...) asparagine glycans are attached at residues N70 and N77.

This sequence belongs to the alpha/beta interferon family.

It is found in the secreted. Its function is as follows. Has antiviral activities. This is Interferon from Meleagris gallopavo (Wild turkey).